Consider the following 113-residue polypeptide: Large ribosomal subunit protein uL24 (113 aa).

This sequence belongs to the universal ribosomal protein uL24 family. As to quaternary structure, part of the 50S ribosomal subunit.

One of two assembly initiator proteins, it binds directly to the 5'-end of the 23S rRNA, where it nucleates assembly of the 50S subunit. Functionally, one of the proteins that surrounds the polypeptide exit tunnel on the outside of the subunit. This Synechococcus elongatus (strain ATCC 33912 / PCC 7942 / FACHB-805) (Anacystis nidulans R2) protein is Large ribosomal subunit protein uL24.